The following is a 397-amino-acid chain: 2-deoxy-scyllo-inosose synthase (397 aa).

Residues Asp-41, 71 to 74 (EPYK), 103 to 107 (GVIGN), 127 to 128 (TS), 138 to 140 (SLK), and 149 to 150 (KN) contribute to the NAD(+) site. The active site involves Lys-140. Glu-182 serves as a coordination point for Co(2+). Glu-242 is a catalytic residue. Co(2+)-binding residues include His-245 and His-261.

The protein belongs to the sugar phosphate cyclases superfamily. DOI synthase family. NAD(+) is required as a cofactor. Requires Co(2+) as cofactor.

It catalyses the reaction D-glucose 6-phosphate = 2-deoxy-L-scyllo-inosose + phosphate. Its pathway is metabolic intermediate biosynthesis; 2-deoxystreptamine biosynthesis; 2-deoxystreptamine from D-glucose 6-phosphate: step 1/4. It functions in the pathway antibiotic biosynthesis; gentamicin biosynthesis. Functionally, catalyzes the intramolecular carbocycle formation from D-glucose-6-phosphate to 2-deoxy-scyllo-inosose (DOI). The protein is 2-deoxy-scyllo-inosose synthase (gtmA) of Micromonospora echinospora (Micromonospora purpurea).